Reading from the N-terminus, the 243-residue chain is MNSLFLINESFTNGYISSVLDIISILAIFCGISVIVNKNPIISVLFLIGLFASVSSYLILLGLSFIGLAYLIVYIGAISILFLFILMLINIRISELQSNTNNSIPLTIILGISLSYSLFQLLPYDIAILSNFSSNINNNLYNLSMNKQNNGNFGINTTPAVSLQPKNNDLLFVTSKIWDGNLAESNHITTIGNVMYSNYSIWLFLASFILLLAMVGSIVIIMKSNASWGGALPNTRETKTEGR.

5 helical membrane-spanning segments follow: residues 16–36, 41–61, 69–89, 104–124, and 201–221; these read ISSV…SVIV, IISV…LILL, AYLI…LMLI, IPLT…LLPY, and IWLF…IVII.

This sequence belongs to the complex I subunit 6 family.

The protein localises to the mitochondrion membrane. It catalyses the reaction a ubiquinone + NADH + 5 H(+)(in) = a ubiquinol + NAD(+) + 4 H(+)(out). Its function is as follows. Core subunit of the mitochondrial membrane respiratory chain NADH dehydrogenase (Complex I) that is believed to belong to the minimal assembly required for catalysis. Complex I functions in the transfer of electrons from NADH to the respiratory chain. The immediate electron acceptor for the enzyme is believed to be ubiquinone. In Neurospora crassa (strain ATCC 24698 / 74-OR23-1A / CBS 708.71 / DSM 1257 / FGSC 987), this protein is NADH-ubiquinone oxidoreductase chain 6 (ndh-6).